Here is a 172-residue protein sequence, read N- to C-terminus: Adenine phosphoribosyltransferase (172 aa).

It belongs to the purine/pyrimidine phosphoribosyltransferase family. As to quaternary structure, homodimer.

The protein localises to the cytoplasm. It carries out the reaction AMP + diphosphate = 5-phospho-alpha-D-ribose 1-diphosphate + adenine. Its pathway is purine metabolism; AMP biosynthesis via salvage pathway; AMP from adenine: step 1/1. Functionally, catalyzes a salvage reaction resulting in the formation of AMP, that is energically less costly than de novo synthesis. In Polynucleobacter asymbioticus (strain DSM 18221 / CIP 109841 / QLW-P1DMWA-1) (Polynucleobacter necessarius subsp. asymbioticus), this protein is Adenine phosphoribosyltransferase.